A 222-amino-acid polypeptide reads, in one-letter code: Peptide methionine sulfoxide reductase MsrA (222 aa).

Cys60 is an active-site residue.

The protein belongs to the MsrA Met sulfoxide reductase family.

It carries out the reaction L-methionyl-[protein] + [thioredoxin]-disulfide + H2O = L-methionyl-(S)-S-oxide-[protein] + [thioredoxin]-dithiol. The enzyme catalyses [thioredoxin]-disulfide + L-methionine + H2O = L-methionine (S)-S-oxide + [thioredoxin]-dithiol. In terms of biological role, has an important function as a repair enzyme for proteins that have been inactivated by oxidation. Catalyzes the reversible oxidation-reduction of methionine sulfoxide in proteins to methionine. This Pseudomonas putida (strain GB-1) protein is Peptide methionine sulfoxide reductase MsrA.